Here is a 116-residue protein sequence, read N- to C-terminus: Flagellar transcriptional regulator FlhD (116 aa).

Belongs to the FlhD family. Homodimer; disulfide-linked. Forms a heterohexamer composed of two FlhC and four FlhD subunits. Each FlhC binds a FlhD dimer, forming a heterotrimer, and a hexamer assembles by dimerization of two heterotrimers.

It is found in the cytoplasm. Its function is as follows. Functions in complex with FlhC as a master transcriptional regulator that regulates transcription of several flagellar and non-flagellar operons by binding to their promoter region. Activates expression of class 2 flagellar genes, including fliA, which is a flagellum-specific sigma factor that turns on the class 3 genes. Also regulates genes whose products function in a variety of physiological pathways. The sequence is that of Flagellar transcriptional regulator FlhD from Escherichia coli O9:H4 (strain HS).